Here is a 96-residue protein sequence, read N- to C-terminus: UPF0729 protein AGAP000931 (96 aa).

The tract at residues 65-96 (VPPGHDPVGPTVAADTATSDAVDDAASSKKTL) is disordered. The span at 75–96 (TVAADTATSDAVDDAASSKKTL) shows a compositional bias: low complexity.

It belongs to the UPF0729 family.

This chain is UPF0729 protein AGAP000931, found in Anopheles gambiae (African malaria mosquito).